The primary structure comprises 258 residues: Indole-3-glycerol phosphate synthase (258 aa).

Belongs to the TrpC family.

The catalysed reaction is 1-(2-carboxyphenylamino)-1-deoxy-D-ribulose 5-phosphate + H(+) = (1S,2R)-1-C-(indol-3-yl)glycerol 3-phosphate + CO2 + H2O. The protein operates within amino-acid biosynthesis; L-tryptophan biosynthesis; L-tryptophan from chorismate: step 4/5. In Campylobacter fetus subsp. fetus (strain 82-40), this protein is Indole-3-glycerol phosphate synthase.